Here is a 391-residue protein sequence, read N- to C-terminus: Chalcone synthase 2 (391 aa).

The active site involves cysteine 164.

This sequence belongs to the thiolase-like superfamily. Chalcone/stilbene synthases family.

It catalyses the reaction (E)-4-coumaroyl-CoA + 3 malonyl-CoA + 3 H(+) = 2',4,4',6'-tetrahydroxychalcone + 3 CO2 + 4 CoA. Its pathway is secondary metabolite biosynthesis; flavonoid biosynthesis. Its function is as follows. The primary product of this enzyme is 4,2',4',6'-tetrahydroxychalcone (also termed naringenin-chalcone or chalcone) which can under specific conditions spontaneously isomerize into naringenin. The protein is Chalcone synthase 2 (CHS2) of Citrus sinensis (Sweet orange).